The sequence spans 239 residues: Transcriptional regulatory protein BtsR (239 aa).

In terms of domain architecture, Response regulatory spans 3–116 (KVLIVDDEPL…RLEKTLHRLR (114 aa)). Asp-54 carries the post-translational modification 4-aspartylphosphate. One can recognise an HTH LytTR-type domain in the interval 137–239 (IPCTGHSRIY…LKSLKEAIGL (103 aa)).

Post-translationally, phosphorylated by BtsS.

Its function is as follows. Member of the two-component regulatory system BtsS/BtsR. BtsR regulates expression of btsT by binding to its promoter region. This chain is Transcriptional regulatory protein BtsR, found in Salmonella typhimurium (strain LT2 / SGSC1412 / ATCC 700720).